A 390-amino-acid polypeptide reads, in one-letter code: Succinate--CoA ligase [ADP-forming] subunit beta (390 aa).

An ATP-grasp domain is found at 9–248 (KEILRRHKAN…ITEEDPLEVQ (240 aa)). ATP is bound by residues Lys-50, 57 to 59 (GRG), Glu-103, Ile-106, and Glu-111. The Mg(2+) site is built by Asn-203 and Asp-217. Residues Asn-268 and 325–327 (GIV) contribute to the substrate site.

This sequence belongs to the succinate/malate CoA ligase beta subunit family. As to quaternary structure, heterotetramer of two alpha and two beta subunits. The cofactor is Mg(2+).

The enzyme catalyses succinate + ATP + CoA = succinyl-CoA + ADP + phosphate. It carries out the reaction GTP + succinate + CoA = succinyl-CoA + GDP + phosphate. It participates in carbohydrate metabolism; tricarboxylic acid cycle; succinate from succinyl-CoA (ligase route): step 1/1. Its function is as follows. Succinyl-CoA synthetase functions in the citric acid cycle (TCA), coupling the hydrolysis of succinyl-CoA to the synthesis of either ATP or GTP and thus represents the only step of substrate-level phosphorylation in the TCA. The beta subunit provides nucleotide specificity of the enzyme and binds the substrate succinate, while the binding sites for coenzyme A and phosphate are found in the alpha subunit. This is Succinate--CoA ligase [ADP-forming] subunit beta from Leptospira interrogans serogroup Icterohaemorrhagiae serovar copenhageni (strain Fiocruz L1-130).